We begin with the raw amino-acid sequence, 821 residues long: Protein EFR3 homolog A (821 aa).

Phosphoserine is present on residues Ser-360, Ser-363, Ser-422, and Ser-694.

Belongs to the EFR3 family. In terms of assembly, component of a phosphatidylinositol 4-kinase (PI4K) complex, composed of PI4KA, EFR3 (EFR3A or EFR3B), TTC7 (TTC7A or TTC7B) and HYCC (HYCC1 or HYCC2). Palmitoylated at its N-terminus, anchoring the protein to the plasma membrane.

It is found in the cell membrane. The protein resides in the cytoplasm. The protein localises to the cytosol. Functionally, component of a complex required to localize phosphatidylinositol 4-kinase (PI4K) to the plasma membrane. The complex acts as a regulator of phosphatidylinositol 4-phosphate (PtdIns(4)P) synthesis. In the complex, EFR3A probably acts as the membrane-anchoring component. Also involved in responsiveness to G-protein-coupled receptors; it is however unclear whether this role is direct or indirect. In Homo sapiens (Human), this protein is Protein EFR3 homolog A.